A 492-amino-acid polypeptide reads, in one-letter code: Cytochrome P450 2B19 (492 aa).

Phosphoserine; by PKA is present on S129. C437 lines the heme pocket.

The protein belongs to the cytochrome P450 family. Requires heme as cofactor. Expressed only in differentiated keratinocytes in skin.

The protein resides in the endoplasmic reticulum membrane. It is found in the microsome membrane. It catalyses the reaction an organic molecule + reduced [NADPH--hemoprotein reductase] + O2 = an alcohol + oxidized [NADPH--hemoprotein reductase] + H2O + H(+). Cytochromes P450 are a group of heme-thiolate monooxygenases. In liver microsomes, this enzyme is involved in an NADPH-dependent electron transport pathway. It oxidizes a variety of structurally unrelated compounds, including steroids, fatty acids, and xenobiotics. The chain is Cytochrome P450 2B19 (Cyp2b19) from Mus musculus (Mouse).